A 249-amino-acid polypeptide reads, in one-letter code: MTRYKATISYDGYAFAGFQRQPHARSVQEEIEKTLTRLNKGQTITVHGAGRTDSGVHALGQVIHFDLPYQMDEEKLRFALDTQSPEDIDVISIELVAADFHCRYAKHSKTYEFIVDRGRPKNPMRRHYATHFPYPLDVERMQIAIKKLEGTHDFTGFTASGTSVEDKVRTITEASLIVDETGQFLTFTFSGNGFLYKQIRNMVGTLLKIGNNRMPVEQIDLILEKKDRQLAGPTAAPNGLYLKEIRYEE.

Residue Asp-53 is the Nucleophile of the active site. Position 111 (Tyr-111) interacts with substrate.

This sequence belongs to the tRNA pseudouridine synthase TruA family. As to quaternary structure, homodimer.

It catalyses the reaction uridine(38/39/40) in tRNA = pseudouridine(38/39/40) in tRNA. Formation of pseudouridine at positions 38, 39 and 40 in the anticodon stem and loop of transfer RNAs. The protein is tRNA pseudouridine synthase A of Streptococcus pneumoniae (strain Taiwan19F-14).